A 391-amino-acid polypeptide reads, in one-letter code: MSVALAGSPATNSAQYEPLRVMIVDDSVVIRGLISRWVEAEPDMVVAASLRTGLDAVNQLERVKPDVAVLDIEMPELDGISALPQLLAKKRDLVVIMASTLTRRNAEISFKALSLGAADYIPKPETTREPQAADIFKHDLLQKIRSLGGRVRRRAVPGVAAPAIAREPHPAPLPHPAVATPTVASQAALVKRSFGPTAPRVLLIGSSTGGPQALMSMVADIGPVIDRFPVLITQHMPPTFTTILAEHLARASRRPAHEGIEGEAIKPGNIYLAPGGKHMRVAKQGGNPVIALDDGPPVNFCKPAVDPLFMSAIEVWQGGILAVVLTGMGSDGMRGGKDIVAAGGSVIAQDEASSVVWGMPGAVANAGVCAAVLPLNQIGPKVVRLFAGDRS.

Residues 20-138 (RVMIVDDSVV…EPQAADIFKH (119 aa)) enclose the Response regulatory domain. Asp-71 bears the 4-aspartylphosphate mark. In terms of domain architecture, CheB-type methylesterase spans 196–383 (PTAPRVLLIG…PLNQIGPKVV (188 aa)). Residues Ser-207, His-235, and Asp-331 contribute to the active site.

It belongs to the CheB family. In terms of processing, phosphorylated by CheA. Phosphorylation of the N-terminal regulatory domain activates the methylesterase activity.

It is found in the cytoplasm. It carries out the reaction [protein]-L-glutamate 5-O-methyl ester + H2O = L-glutamyl-[protein] + methanol + H(+). It catalyses the reaction L-glutaminyl-[protein] + H2O = L-glutamyl-[protein] + NH4(+). Involved in chemotaxis. Part of a chemotaxis signal transduction system that modulates chemotaxis in response to various stimuli. Catalyzes the demethylation of specific methylglutamate residues introduced into the chemoreceptors (methyl-accepting chemotaxis proteins or MCP) by CheR. Also mediates the irreversible deamidation of specific glutamine residues to glutamic acid. The chain is Protein-glutamate methylesterase/protein-glutamine glutaminase of group 2 operon from Rhodopseudomonas palustris (strain ATCC BAA-98 / CGA009).